Reading from the N-terminus, the 91-residue chain is Large ribosomal subunit protein uL23 (91 aa).

This sequence belongs to the universal ribosomal protein uL23 family. In terms of assembly, part of the 50S ribosomal subunit. Contacts protein L29, and trigger factor when it is bound to the ribosome.

Functionally, one of the early assembly proteins it binds 23S rRNA. One of the proteins that surrounds the polypeptide exit tunnel on the outside of the ribosome. Forms the main docking site for trigger factor binding to the ribosome. The sequence is that of Large ribosomal subunit protein uL23 from Staphylococcus haemolyticus (strain JCSC1435).